A 386-amino-acid chain; its full sequence is Ribosomal RNA small subunit methyltransferase H (386 aa).

S-adenosyl-L-methionine contacts are provided by residues 97–99 (GGH), D116, Y143, D167, and Q174.

The protein belongs to the methyltransferase superfamily. RsmH family.

It localises to the cytoplasm. The enzyme catalyses cytidine(1402) in 16S rRNA + S-adenosyl-L-methionine = N(4)-methylcytidine(1402) in 16S rRNA + S-adenosyl-L-homocysteine + H(+). Its function is as follows. Specifically methylates the N4 position of cytidine in position 1402 (C1402) of 16S rRNA. The polypeptide is Ribosomal RNA small subunit methyltransferase H (Mycolicibacterium paratuberculosis (strain ATCC BAA-968 / K-10) (Mycobacterium paratuberculosis)).